The primary structure comprises 471 residues: N-succinylglutamate 5-semialdehyde dehydrogenase (471 aa).

207-212 is an NAD(+) binding site; the sequence is GSAHAG. Active-site residues include glutamate 230 and cysteine 264.

The protein belongs to the aldehyde dehydrogenase family. AstD subfamily.

It carries out the reaction N-succinyl-L-glutamate 5-semialdehyde + NAD(+) + H2O = N-succinyl-L-glutamate + NADH + 2 H(+). The protein operates within amino-acid degradation; L-arginine degradation via AST pathway; L-glutamate and succinate from L-arginine: step 4/5. Its function is as follows. Catalyzes the NAD-dependent reduction of succinylglutamate semialdehyde into succinylglutamate. The protein is N-succinylglutamate 5-semialdehyde dehydrogenase of Novosphingobium aromaticivorans (strain ATCC 700278 / DSM 12444 / CCUG 56034 / CIP 105152 / NBRC 16084 / F199).